Consider the following 405-residue polypeptide: uncharacterized protein (405 aa).

Transmembrane regions (helical) follow at residues 19 to 39 (IVSI…PLAV), 48 to 68 (MGFS…ATLL), 85 to 105 (IVVF…LADI), 106 to 126 (ASAW…ILGI), 129 to 149 (SFAG…LHIG), 156 to 176 (GIVT…CYAW), 178 to 198 (GLQG…LLAL), 224 to 244 (GMAL…ITLF), 252 to 272 (GAAF…LLFP), 283 to 303 (VAMI…TAAM), 309 to 329 (IGVL…GVVA), 344 to 364 (TYTV…GLVM), and 366 to 386 (WAGV…ALLL).

It belongs to the major facilitator superfamily. YhhS family.

The protein resides in the cell inner membrane. This is an uncharacterized protein from Salmonella enteritidis PT4 (strain P125109).